The sequence spans 130 residues: Ribosome-binding factor A (130 aa).

The protein belongs to the RbfA family. Monomer. Binds 30S ribosomal subunits, but not 50S ribosomal subunits or 70S ribosomes.

It localises to the cytoplasm. One of several proteins that assist in the late maturation steps of the functional core of the 30S ribosomal subunit. Associates with free 30S ribosomal subunits (but not with 30S subunits that are part of 70S ribosomes or polysomes). Required for efficient processing of 16S rRNA. May interact with the 5'-terminal helix region of 16S rRNA. The protein is Ribosome-binding factor A of Prochlorococcus marinus (strain MIT 9301).